A 907-amino-acid chain; its full sequence is Probable disease resistance protein At1g58390 (907 aa).

The region spanning 144-456 (QGDRQREMRQ…AEGISTAEDY (313 aa)) is the NB-ARC domain. 190–197 (GMGGLGKT) lines the ATP pocket. 2 LRR repeats span residues 608–631 (LIHLRYLSLQDAKVSHLPSSLGNL) and 843–868 (MPLLETLSILDCEELKEIPDGLRFIY).

This sequence belongs to the disease resistance NB-LRR family.

Possible disease resistance protein. The polypeptide is Probable disease resistance protein At1g58390 (Arabidopsis thaliana (Mouse-ear cress)).